A 156-amino-acid chain; its full sequence is Small ribosomal subunit protein uS7 (156 aa).

This sequence belongs to the universal ribosomal protein uS7 family. In terms of assembly, part of the 30S ribosomal subunit. Contacts proteins S9 and S11.

In terms of biological role, one of the primary rRNA binding proteins, it binds directly to 16S rRNA where it nucleates assembly of the head domain of the 30S subunit. Is located at the subunit interface close to the decoding center, probably blocks exit of the E-site tRNA. This chain is Small ribosomal subunit protein uS7, found in Symbiobacterium thermophilum (strain DSM 24528 / JCM 14929 / IAM 14863 / T).